We begin with the raw amino-acid sequence, 130 residues long: KTYERCELARAMKRLGLDGYWGYSLGHWVCAAKYESNFNTGATNYNPGDQSTDYGILQINSRWWCNDGKTPRTKNACKIQCRELLTADITASVNCAKRVVRDPNGMGAWVAWTKNCKGRDVSPWIRDCGL.

The C-type lysozyme domain maps to 1 to 130 (KTYERCELAR…VSPWIRDCGL (130 aa)). 4 cysteine pairs are disulfide-bonded: Cys-6–Cys-128, Cys-30–Cys-116, Cys-65–Cys-81, and Cys-77–Cys-95. Residues Glu-35 and Asp-53 contribute to the active site.

The protein belongs to the glycosyl hydrolase 22 family. As to quaternary structure, monomer.

The protein localises to the secreted. The enzyme catalyses Hydrolysis of (1-&gt;4)-beta-linkages between N-acetylmuramic acid and N-acetyl-D-glucosamine residues in a peptidoglycan and between N-acetyl-D-glucosamine residues in chitodextrins.. Its function is as follows. Lysozymes have primarily a bacteriolytic function; those in tissues and body fluids are associated with the monocyte-macrophage system and enhance the activity of immunoagents. The chain is Lysozyme C (LYZ) from Chelonia mydas (Green sea-turtle).